The following is a 160-amino-acid chain: UPF0225 protein PputW619_1140 (160 aa).

The protein belongs to the UPF0225 family.

This is UPF0225 protein PputW619_1140 from Pseudomonas putida (strain W619).